The sequence spans 138 residues: SHSKHHATYVKGANDAVTKLEEARAKEDHSTILLNEKNLAFNLAGHVNHTIWWKNLSPNGGDKPTGELAAAIDEAFGSFDKFRAQFHAAATTVQGSGWAALGWDTLGNKLLIFQVYDHQTNFPLGIVPLLLLDMWEHA.

Mn(2+) contacts are provided by serine 1, histidine 49, aspartate 133, and histidine 137.

The protein belongs to the iron/manganese superoxide dismutase family. Requires Mn(2+) as cofactor.

The catalysed reaction is 2 superoxide + 2 H(+) = H2O2 + O2. Its function is as follows. Destroys superoxide anion radicals which are normally produced within the cells and which are toxic to biological systems. The polypeptide is Superoxide dismutase [Mn] (sodA) (Mycobacterium marinum).